Consider the following 632-residue polypeptide: tRNA endonuclease VMS1 (632 aa).

The C2H2-type zinc finger occupies methionine 72–histidine 96. The disordered stretch occupies residues histidine 123–glutamine 155. A VLRF1 domain is found at proline 232–leucine 392. Residue glutamine 295 is part of the active site. ANK repeat units lie at residues leucine 470–isoleucine 500 and leucine 504–glutamate 530. Coiled-coil stretches lie at residues leucine 544–alanine 582 and threonine 608–tyrosine 632. A compositionally biased stretch (basic and acidic residues) spans lysine 578–proline 589. Residues lysine 578 to tyrosine 632 are disordered. Residues asparagine 595 to threonine 608 show a composition bias toward polar residues. Residues aspartate 609 to tyrosine 632 are compositionally biased toward basic and acidic residues.

Belongs to the ANKZF1/VMS1 family. Associates with 60S ribosomal subunit. Interacts with CDC48. Interacts with NPL4.

The protein localises to the cytoplasm. It localises to the mitochondrion. Its subcellular location is the endoplasmic reticulum membrane. Functionally, endonuclease that cleaves polypeptidyl-tRNAs downstream of the ribosome-associated quality control (RQC) pathway to release incompletely synthesized polypeptides for degradation. The RQC pathway disassembles aberrantly stalled translation complexes to recycle or degrade the constituent parts. VMS1 acts downstream disassembly of stalled ribosomes and specifically cleaves off the terminal 3'-CCA nucleotides universal to all tRNAs from polypeptidyl-tRNAs, releasing (1) ubiquitinated polypeptides from 60S ribosomal subunit for degradation by the ERAD pathway and (2) cleaved tRNAs for recycling. Component of an evolutionarily conserved system for ubiquitin-mediated mitochondria-associated protein degradation (MAD), which is necessary to maintain mitochondrial, cellular, and organismal viability. The chain is tRNA endonuclease VMS1 from Saccharomyces cerevisiae (strain ATCC 204508 / S288c) (Baker's yeast).